A 3421-amino-acid chain; its full sequence is Hemocyanin 2 (3421 aa).

The first 19 residues, M1–S19, serve as a signal peptide directing secretion. The interval V20–N442 is functional unit a (wall). H62 contributes to the Cu cation binding site. Residues C68 and C78 are joined by a disulfide bond. The segment at residues C79–H81 is a cross-link (2'-(S-cysteinyl)-histidine (Cys-His)). Cu cation is bound by residues H81, H90, H200, H204, and H231. Cystine bridges form between C190-C257 and C344-C356. An N-linked (GlcNAc...) asparagine glycan is attached at N408. The interval L443 to S853 is functional unit b (wall). Cu cation is bound at residue H483. Residues C489 and C500 are joined by a disulfide bond. Residues C501–H503 constitute a cross-link (2'-(S-cysteinyl)-histidine (Cys-His)). The Cu cation site is built by H503, H512, H622, H626, H653, and H894. Residues C612 and C678 are joined by a disulfide bond. Residues S632–S673 form a WD 1 repeat. Residues R854–A1275 form a functional unit c (wall) region. A disulfide bridge links C900 with C911. A cross-link (2'-(S-cysteinyl)-histidine (Cys-His)) is located at residues C912 to H914. Cu cation-binding residues include H914, H923, H1033, H1037, and H1063. Disulfide bonds link C1023-C1090 and C1180-C1187. A WD 2 repeat occupies N1043–P1084. N-linked (GlcNAc...) asparagine glycosylation is present at N1183. The tract at residues S1276 to H1685 is functional unit d (wall). Residue H1313 coordinates Cu cation. A disulfide bridge links C1319 with C1328. A cross-link (2'-(S-cysteinyl)-histidine (Cys-His)) is located at residues C1329 to H1331. Positions 1331 and 1340 each coordinate Cu cation. The stretch at Q1387–M1425 is one WD 3 repeat. Cystine bridges form between C1434/C1501 and C1590/C1599. Cu cation is bound by residues H1444, H1448, and H1475. The stretch at R1454–P1495 is one WD 4 repeat. N-linked (GlcNAc...) asparagine glycosylation occurs at N1653. The interval N1686–R2102 is functional unit e (wall). H1726 is a binding site for Cu cation. An intrachain disulfide couples C1732 to C1743. A cross-link (2'-(S-cysteinyl)-histidine (Cys-His)) is located at residues C1744–H1746. Cu cation contacts are provided by H1746, H1755, H1868, H1872, and H1899. Cystine bridges form between C1858–C1925 and C2014–C2020. One copy of the WD 5 repeat lies at S1878–S1919. The functional unit f (wall) stretch occupies residues N2103 to G2522. A Cu cation-binding site is contributed by H2143. A disulfide bridge links C2149 with C2159. A cross-link (2'-(S-cysteinyl)-histidine (Cys-His)) is located at residues C2160–H2162. Cu cation is bound by residues H2162, H2171, H2281, H2285, and H2312. One copy of the WD 6 repeat lies at P2168–P2204. 2 cysteine pairs are disulfide-bonded: C2271–C2338 and C2425–C2431. The interval S2523 to D2929 is functional unit g (internal arc). Residue H2563 participates in Cu cation binding. C2569 and C2579 are joined by a disulfide. The 2'-(S-cysteinyl)-histidine (Cys-His) cross-link spans C2580–H2582. Cu cation contacts are provided by H2582, H2591, H2691, H2695, and H2722. 2 disulfides stabilise this stretch: C2681–C2748 and C2835–C2841. A WD 7 repeat occupies G2700–Q2742. Positions P2898–R2927 are disordered. The tract at residues G2930–E3421 is functional unit h (internal slab). H2970 contributes to the Cu cation binding site. A disulfide bond links C2976 and C2986. The 2'-(S-cysteinyl)-histidine (Cys-His) cross-link spans C2987 to H2989. 5 residues coordinate Cu cation: H2989, H2998, H3099, H3103, and H3130. 2 disulfide bridges follow: C3089–C3156 and C3374–C3407. The stretch at T3109 to P3150 is one WD 8 repeat.

It belongs to the tyrosinase family. Hemocyanin subfamily. In terms of assembly, homo-didecamer and homo-multidecamer. Post-translationally, probably N-glycosylated. Asn-2489 is buried deeply in the protein which make it inaccessible for sugar attachment. Hemolymph.

It is found in the secreted. It localises to the extracellular space. Hemocyanins are copper-containing oxygen carriers occurring freely dissolved in the hemolymph of many mollusks and arthropods. The chain is Hemocyanin 2 from Megathura crenulata (Giant keyhole limpet).